We begin with the raw amino-acid sequence, 297 residues long: uncharacterized protein (297 aa).

5 consecutive transmembrane segments (helical) span residues 114-136, 150-170, 197-217, 227-247, and 269-289; these read YNRW…LSSG, LLYD…VFNV, MPIV…GVHL, AFTV…KAMI, and FINT…PGLL.

It belongs to the ThrE exporter (TC 2.A.79) family.

The protein localises to the cell inner membrane. This is an uncharacterized protein from Haemophilus influenzae (strain ATCC 51907 / DSM 11121 / KW20 / Rd).